Here is a 468-residue protein sequence, read N- to C-terminus: Glutamate--tRNA ligase (468 aa).

An L-glutamate-binding site is contributed by 5-7 (RIA). The short motif at 8–18 (PSPTGDPHVGT) is the 'HIGH' region element. An ATP-binding site is contributed by His15. Residues Glu41, 187-191 (YHLAN), and Arg205 contribute to the L-glutamate site. ATP is bound by residues Glu208, Leu236, 243–247 (KISKR), and Lys246. A 'KMSKS' region motif is present at residues 243-247 (KISKR). Residues 432–447 (QPLRAALTGSLETPGL) are interaction with tRNA.

The protein belongs to the class-I aminoacyl-tRNA synthetase family. Glutamate--tRNA ligase type 1 subfamily. Monomer.

Its subcellular location is the cytoplasm. It catalyses the reaction tRNA(Glu) + L-glutamate + ATP = L-glutamyl-tRNA(Glu) + AMP + diphosphate. In the absence of bound tRNA, ATP is bound in a non-productive mode, and the enzyme cannot activate amino acids. Its function is as follows. Catalyzes the attachment of glutamate to tRNA(Glu) in a two-step reaction: glutamate is first activated by ATP to form Glu-AMP and then transferred to the acceptor end of tRNA(Glu). The chain is Glutamate--tRNA ligase from Thermus thermophilus (strain ATCC 27634 / DSM 579 / HB8).